A 279-amino-acid polypeptide reads, in one-letter code: uncharacterized protein (279 aa).

Positions 1–31 (MLVQSRTLVTAILSCSLVFGTTVNGASVAIA) are cleaved as a signal peptide.

This is an uncharacterized protein from Corynebacterium glutamicum (strain ATCC 13032 / DSM 20300 / JCM 1318 / BCRC 11384 / CCUG 27702 / LMG 3730 / NBRC 12168 / NCIMB 10025 / NRRL B-2784 / 534).